A 787-amino-acid polypeptide reads, in one-letter code: Signal transducer and activator of transcription 5B (787 aa).

Y90 is modified (phosphotyrosine). A Phosphoserine modification is found at S128. Residues 589-686 (WNDGAILGFV…EVYSKYYTPV (98 aa)) enclose the SH2 domain. Y682 carries the phosphotyrosine modification. Y699 carries the phosphotyrosine; by HCK, JAK and PTK6 modification.

The protein belongs to the transcription factor STAT family. Upon activation, forms a homodimer or a heterodimer with a related family member. Binds NR3C1. Interacts with NCOA1. Interacts with NMI. Interacts with SOCS7. Interacts (via SH2 domain) with INSR. Interacts with CPEB3; this inhibits STAT5B-mediated transcriptional activation. Post-translationally, tyrosine phosphorylated in response to signaling via activated KIT, resulting in translocation to the nucleus. Tyrosine phosphorylated in response to signaling via activated FLT3; wild-type FLT3 results in much weaker phosphorylation than constitutively activated mutant FLT3. Alternatively, can be phosphorylated by JAK2. Phosphorylation at Tyr-699 by PTK6 or HCK leads to an increase of its transcriptional activity.

The protein resides in the cytoplasm. It is found in the nucleus. Its function is as follows. Carries out a dual function: signal transduction and activation of transcription. Mediates cellular responses to the cytokine KITLG/SCF and other growth factors. Binds to the GAS element and activates PRL-induced transcription. Positively regulates hematopoietic/erythroid differentiation. In Sus scrofa (Pig), this protein is Signal transducer and activator of transcription 5B (STAT5B).